Consider the following 202-residue polypeptide: Holliday junction branch migration complex subunit RuvA (202 aa).

The domain I stretch occupies residues 1-63 (MIEYLKGAIV…EDAHLLYGFS (63 aa)). The segment at 64 to 142 (TKEERTLFGQ…LETSSDEILS (79 aa)) is domain II. The interval 143–153 (ARTAVGDAALN) is flexible linker. The interval 153–202 (NTIASGEEAISALKMLGFADPAIRKAVKSILSEDSSLAVEDIIKRALRML) is domain III.

Belongs to the RuvA family. As to quaternary structure, homotetramer. Forms an RuvA(8)-RuvB(12)-Holliday junction (HJ) complex. HJ DNA is sandwiched between 2 RuvA tetramers; dsDNA enters through RuvA and exits via RuvB. An RuvB hexamer assembles on each DNA strand where it exits the tetramer. Each RuvB hexamer is contacted by two RuvA subunits (via domain III) on 2 adjacent RuvB subunits; this complex drives branch migration. In the full resolvosome a probable DNA-RuvA(4)-RuvB(12)-RuvC(2) complex forms which resolves the HJ.

Its subcellular location is the cytoplasm. The RuvA-RuvB-RuvC complex processes Holliday junction (HJ) DNA during genetic recombination and DNA repair, while the RuvA-RuvB complex plays an important role in the rescue of blocked DNA replication forks via replication fork reversal (RFR). RuvA specifically binds to HJ cruciform DNA, conferring on it an open structure. The RuvB hexamer acts as an ATP-dependent pump, pulling dsDNA into and through the RuvAB complex. HJ branch migration allows RuvC to scan DNA until it finds its consensus sequence, where it cleaves and resolves the cruciform DNA. The protein is Holliday junction branch migration complex subunit RuvA of Porphyromonas gingivalis (strain ATCC BAA-308 / W83).